The chain runs to 339 residues: Cathepsin B (339 aa).

Residues 1–17 (MWQLWASLCCLLVLANA) form the signal peptide. Residues 18–79 (RSRPSFHPLS…QRVMFTEDLK (62 aa)) constitute a propeptide, activation peptide. 6 disulfide bridges follow: C93-C122, C105-C150, C141-C207, C142-C146, C179-C211, and C187-C198. The active site involves C108. The N-linked (GlcNAc...) asparagine glycan is linked to N192. At K220 the chain carries N6-acetyllysine. Catalysis depends on residues H278 and N298. Positions 334–339 (QYWEKI) are excised as a propeptide.

The protein belongs to the peptidase C1 family. In terms of assembly, dimer of a heavy chain and a light chain cross-linked by a disulfide bond. Interacts with SRPX2. Directly interacts with SHKBP1. In terms of tissue distribution, expressed in the stratum spinosum of the epidermis. Weak expression is detected in the stratum granulosum.

It is found in the lysosome. Its subcellular location is the melanosome. The protein localises to the secreted. The protein resides in the extracellular space. It localises to the apical cell membrane. It catalyses the reaction Hydrolysis of proteins with broad specificity for peptide bonds. Preferentially cleaves -Arg-Arg-|-Xaa bonds in small molecule substrates (thus differing from cathepsin L). In addition to being an endopeptidase, shows peptidyl-dipeptidase activity, liberating C-terminal dipeptides.. Inhibited by leupeptin. Thiol protease which is believed to participate in intracellular degradation and turnover of proteins. Cleaves matrix extracellular phosphoglycoprotein MEPE. Involved in the solubilization of cross-linked TG/thyroglobulin in the thyroid follicle lumen. Has also been implicated in tumor invasion and metastasis. This Homo sapiens (Human) protein is Cathepsin B (CTSB).